Here is a 40-residue protein sequence, read N- to C-terminus: Dolichyl-diphosphooligosaccharide--protein glycosyltransferase subunit 4 (40 aa).

Residues 1–4 (MITD) are Lumenal-facing. A helical transmembrane segment spans residues 5–25 (VQLAIFSNVLGVFLFLLVVAY). At 26–40 (HYINANTGKPSAKAK) the chain is on the cytoplasmic side.

This sequence belongs to the OST4 family. Component of the oligosaccharyltransferase (OST) complex.

Its subcellular location is the endoplasmic reticulum membrane. Its function is as follows. Subunit of the oligosaccharyl transferase (OST) complex that catalyzes the initial transfer of a defined glycan (Glc(3)Man(9)GlcNAc(2) in eukaryotes) from the lipid carrier dolichol-pyrophosphate to an asparagine residue within an Asn-X-Ser/Thr consensus motif in nascent polypeptide chains, the first step in protein N-glycosylation. N-glycosylation occurs cotranslationally and the complex associates with the Sec61 complex at the channel-forming translocon complex that mediates protein translocation across the endoplasmic reticulum (ER). All subunits are required for a maximal enzyme activity. The sequence is that of Dolichyl-diphosphooligosaccharide--protein glycosyltransferase subunit 4 from Drosophila erecta (Fruit fly).